Consider the following 354-residue polypeptide: Uroporphyrinogen decarboxylase (354 aa).

Substrate is bound by residues 27-31 (RQAGR), Asp77, Tyr154, Thr209, and His327.

This sequence belongs to the uroporphyrinogen decarboxylase family. Homodimer.

It is found in the cytoplasm. The catalysed reaction is uroporphyrinogen III + 4 H(+) = coproporphyrinogen III + 4 CO2. It participates in porphyrin-containing compound metabolism; protoporphyrin-IX biosynthesis; coproporphyrinogen-III from 5-aminolevulinate: step 4/4. In terms of biological role, catalyzes the decarboxylation of four acetate groups of uroporphyrinogen-III to yield coproporphyrinogen-III. This is Uroporphyrinogen decarboxylase from Histophilus somni (strain 129Pt) (Haemophilus somnus).